Here is a 775-residue protein sequence, read N- to C-terminus: Isopimaradiene synthase (775 aa).

The N-terminal 36 residues, 1–36 (MFSSSLKLKTNPLMDNKIHRSSSDRDFRGSTISSVK), are a transit peptide targeting the chloroplast. Mg(2+) is bound by residues D525, D529, N669, Q672, and E677. The short motif at 525–529 (DDFFD) is the DDXXD motif element.

This sequence belongs to the terpene synthase family. Mg(2+) serves as cofactor. As to expression, ubiquitous expression in roots, stems, leaves and flowers.

The protein resides in the plastid. It localises to the chloroplast. The catalysed reaction is (+)-copalyl diphosphate = isopimara-8(14),15-diene + diphosphate. The protein operates within secondary metabolite biosynthesis; terpenoid biosynthesis. In terms of biological role, involved in the biosynthesis of ent-kaurene diterpenoids natural products such as oridonin, miltiradiene, eriocalyxin B and nezukol, known to exhibit antitumor, anti-inflammatory and antibacterial activities. Catalyzes the conversion of (+)-copalyl diphosphate ((+)-CPP) to isopimaradiene. In Isodon rubescens (Rabdosia rubescens), this protein is Isopimaradiene synthase.